Reading from the N-terminus, the 190-residue chain is Guanylate kinase (190 aa).

A Guanylate kinase-like domain is found at 7–186 (GKLIVFSAPS…AVDDVEAAIV (180 aa)). 14 to 21 (APSGAGKT) is a binding site for ATP.

This sequence belongs to the guanylate kinase family.

Its subcellular location is the cytoplasm. It catalyses the reaction GMP + ATP = GDP + ADP. In terms of biological role, essential for recycling GMP and indirectly, cGMP. This Chlorobium chlorochromatii (strain CaD3) protein is Guanylate kinase.